A 458-amino-acid chain; its full sequence is Glycine--tRNA ligase (458 aa).

Residues R97 and E171 each coordinate substrate. ATP contacts are provided by residues 203–205 (RNE), 213–218 (FRTREF), 287–288 (EL), and 331–334 (GADR). 218 to 222 (FEQME) is a substrate binding site. 327–331 (EPSLG) contributes to the substrate binding site.

This sequence belongs to the class-II aminoacyl-tRNA synthetase family. Homodimer.

The protein resides in the cytoplasm. The catalysed reaction is tRNA(Gly) + glycine + ATP = glycyl-tRNA(Gly) + AMP + diphosphate. In terms of biological role, catalyzes the attachment of glycine to tRNA(Gly). This Bacillus thuringiensis subsp. konkukian (strain 97-27) protein is Glycine--tRNA ligase.